Consider the following 228-residue polypeptide: Cytidylate kinase (228 aa).

Gly17–Thr25 provides a ligand contact to ATP.

The protein belongs to the cytidylate kinase family. Type 1 subfamily.

It is found in the cytoplasm. It carries out the reaction CMP + ATP = CDP + ADP. The catalysed reaction is dCMP + ATP = dCDP + ADP. The protein is Cytidylate kinase of Paraburkholderia phymatum (strain DSM 17167 / CIP 108236 / LMG 21445 / STM815) (Burkholderia phymatum).